We begin with the raw amino-acid sequence, 146 residues long: Hemoglobin subunit beta (146 aa).

The Globin domain occupies 2–146 (HWTAEEKQLI…VAHALARKYH (145 aa)). Residues histidine 63 and histidine 92 each coordinate heme b.

Belongs to the globin family. As to quaternary structure, heterotetramer of two alpha chains and two beta chains. As to expression, red blood cells.

Its function is as follows. Involved in oxygen transport from the lung to the various peripheral tissues. The protein is Hemoglobin subunit beta (HBB) of Aquila chrysaetos (Golden eagle).